Reading from the N-terminus, the 353-residue chain is Photosystem II protein D1 (353 aa).

An N-acetylthreonine modification is found at Thr-2. Thr-2 bears the Phosphothreonine mark. 3 helical membrane-spanning segments follow: residues Tyr-29 to Ser-46, His-118 to Leu-133, and Trp-142 to Ala-156. His-118 lines the chlorophyll a pocket. Tyr-126 is a binding site for pheophytin a. Residues Asp-170 and Glu-189 each contribute to the [CaMn4O5] cluster site. The chain crosses the membrane as a helical span at residues Phe-197 to Leu-218. Residue His-198 participates in chlorophyll a binding. A quinone-binding positions include His-215 and Ser-264–Phe-265. Fe cation is bound at residue His-215. Position 272 (His-272) interacts with Fe cation. The chain crosses the membrane as a helical span at residues Phe-274 to Leu-288. Positions 332, 333, 342, and 344 each coordinate [CaMn4O5] cluster. Residues Ala-345–Gly-353 constitute a propeptide that is removed on maturation.

It belongs to the reaction center PufL/M/PsbA/D family. In terms of assembly, PSII is composed of 1 copy each of membrane proteins PsbA, PsbB, PsbC, PsbD, PsbE, PsbF, PsbH, PsbI, PsbJ, PsbK, PsbL, PsbM, PsbT, PsbX, PsbY, PsbZ, Psb30/Ycf12, at least 3 peripheral proteins of the oxygen-evolving complex and a large number of cofactors. It forms dimeric complexes. Requires The D1/D2 heterodimer binds P680, chlorophylls that are the primary electron donor of PSII, and subsequent electron acceptors. It shares a non-heme iron and each subunit binds pheophytin, quinone, additional chlorophylls, carotenoids and lipids. D1 provides most of the ligands for the Mn4-Ca-O5 cluster of the oxygen-evolving complex (OEC). There is also a Cl(-1) ion associated with D1 and D2, which is required for oxygen evolution. The PSII complex binds additional chlorophylls, carotenoids and specific lipids. as cofactor. Post-translationally, tyr-161 forms a radical intermediate that is referred to as redox-active TyrZ, YZ or Y-Z. C-terminally processed by CTPA; processing is essential to allow assembly of the oxygen-evolving complex and thus photosynthetic growth.

The protein localises to the plastid. It localises to the chloroplast thylakoid membrane. It carries out the reaction 2 a plastoquinone + 4 hnu + 2 H2O = 2 a plastoquinol + O2. In terms of biological role, this is one of the two reaction center proteins of photosystem II. Its function is as follows. Photosystem II (PSII) is a light-driven water:plastoquinone oxidoreductase that uses light energy to abstract electrons from H(2)O, generating O(2) and a proton gradient subsequently used for ATP formation. It consists of a core antenna complex that captures photons, and an electron transfer chain that converts photonic excitation into a charge separation. The D1/D2 (PsbA/PsbD) reaction center heterodimer binds P680, the primary electron donor of PSII as well as several subsequent electron acceptors. This is Photosystem II protein D1 from Pisum sativum (Garden pea).